The following is a 125-amino-acid chain: uncharacterized protein (125 aa).

It to transposase of insertion sequence IS6501.

This is an uncharacterized protein from Sinorhizobium fredii (strain NBRC 101917 / NGR234).